Reading from the N-terminus, the 419-residue chain is MNIASQIEDMGRRARAAGRRLAAASPAAKAGALDHLATLLEQRQDAILAANAADLAAAAEAGMDAPRMDRLRLTPATIAEMAAACRHVAALPDPVGAIETQWQRPNGLLVGKMRIPLGVIAMIYESRPNVTIDSAILCLKAGNAVILRGGSEAIHSNLALAALITEALSSVGLPAEAVQVVSTTDRAVIAELCKLEEHIDVIIPRGGETLIRAVVDMARMPVLKHYKGVCHAYIDRGADLAQAVEIIHNAKVQRPGVCNALEGLLVHRDEAAAFLPAIAERLGNDGVEFRACPASLPLLGDSAIPMKDEDNGQEFHDLILLVRIVDDMDEALAHIAAYGSNHTEIICTRDHGNAMRFLREADASMVAVNASSRFNDGGQLGLGAEIGISTSKLHSYGPMGVQELTTTKFVVFGAGQIRQ.

Belongs to the gamma-glutamyl phosphate reductase family.

The protein resides in the cytoplasm. The enzyme catalyses L-glutamate 5-semialdehyde + phosphate + NADP(+) = L-glutamyl 5-phosphate + NADPH + H(+). Its pathway is amino-acid biosynthesis; L-proline biosynthesis; L-glutamate 5-semialdehyde from L-glutamate: step 2/2. Functionally, catalyzes the NADPH-dependent reduction of L-glutamate 5-phosphate into L-glutamate 5-semialdehyde and phosphate. The product spontaneously undergoes cyclization to form 1-pyrroline-5-carboxylate. This chain is Gamma-glutamyl phosphate reductase, found in Nitratidesulfovibrio vulgaris (strain DP4) (Desulfovibrio vulgaris).